We begin with the raw amino-acid sequence, 449 residues long: ATP-dependent protease ATPase subunit HslU (449 aa).

ATP contacts are provided by residues isoleucine 18, 60-65 (GVGKTE), aspartate 261, glutamate 327, and arginine 399.

This sequence belongs to the ClpX chaperone family. HslU subfamily. A double ring-shaped homohexamer of HslV is capped on each side by a ring-shaped HslU homohexamer. The assembly of the HslU/HslV complex is dependent on binding of ATP.

It localises to the cytoplasm. Its function is as follows. ATPase subunit of a proteasome-like degradation complex; this subunit has chaperone activity. The binding of ATP and its subsequent hydrolysis by HslU are essential for unfolding of protein substrates subsequently hydrolyzed by HslV. HslU recognizes the N-terminal part of its protein substrates and unfolds these before they are guided to HslV for hydrolysis. This Oleidesulfovibrio alaskensis (strain ATCC BAA-1058 / DSM 17464 / G20) (Desulfovibrio alaskensis) protein is ATP-dependent protease ATPase subunit HslU.